We begin with the raw amino-acid sequence, 315 residues long: Porphobilinogen deaminase (315 aa).

C234 is subject to S-(dipyrrolylmethanemethyl)cysteine.

The protein belongs to the HMBS family. In terms of assembly, monomer. Requires dipyrromethane as cofactor.

The enzyme catalyses 4 porphobilinogen + H2O = hydroxymethylbilane + 4 NH4(+). It participates in porphyrin-containing compound metabolism; protoporphyrin-IX biosynthesis; coproporphyrinogen-III from 5-aminolevulinate: step 2/4. In terms of biological role, tetrapolymerization of the monopyrrole PBG into the hydroxymethylbilane pre-uroporphyrinogen in several discrete steps. This is Porphobilinogen deaminase (hemC) from Mycobacterium leprae (strain TN).